Reading from the N-terminus, the 245-residue chain is Enolase-phosphatase E1 (245 aa).

This sequence belongs to the HAD-like hydrolase superfamily. MasA/MtnC family. As to quaternary structure, monomer. Mg(2+) serves as cofactor.

The enzyme catalyses 5-methylsulfanyl-2,3-dioxopentyl phosphate + H2O = 1,2-dihydroxy-5-(methylsulfanyl)pent-1-en-3-one + phosphate. The protein operates within amino-acid biosynthesis; L-methionine biosynthesis via salvage pathway; L-methionine from S-methyl-5-thio-alpha-D-ribose 1-phosphate: step 3/6. It functions in the pathway amino-acid biosynthesis; L-methionine biosynthesis via salvage pathway; L-methionine from S-methyl-5-thio-alpha-D-ribose 1-phosphate: step 4/6. In terms of biological role, bifunctional enzyme that catalyzes the enolization of 2,3-diketo-5-methylthiopentyl-1-phosphate (DK-MTP-1-P) into the intermediate 2-hydroxy-3-keto-5-methylthiopentenyl-1-phosphate (HK-MTPenyl-1-P), which is then dephosphorylated to form the acireductone 1,2-dihydroxy-3-keto-5-methylthiopentene (DHK-MTPene). In Prochlorococcus marinus (strain MIT 9313), this protein is Enolase-phosphatase E1.